The primary structure comprises 134 residues: D-ribose pyranase (134 aa).

H20 functions as the Proton donor in the catalytic mechanism. Residues D28, H99, and 123–125 contribute to the substrate site; that span reads YSN.

This sequence belongs to the RbsD / FucU family. RbsD subfamily. As to quaternary structure, homodecamer.

Its subcellular location is the cytoplasm. The enzyme catalyses beta-D-ribopyranose = beta-D-ribofuranose. The protein operates within carbohydrate metabolism; D-ribose degradation; D-ribose 5-phosphate from beta-D-ribopyranose: step 1/2. In terms of biological role, catalyzes the interconversion of beta-pyran and beta-furan forms of D-ribose. The sequence is that of D-ribose pyranase from Staphylococcus aureus (strain Mu3 / ATCC 700698).